A 197-amino-acid chain; its full sequence is Phosphoheptose isomerase (197 aa).

An SIS domain is found at 37 to 197; that stretch reads MLQCLMNDGK…CIDSVLLEGM (161 aa). A substrate-binding site is contributed by 52 to 54; that stretch reads NGG. Zn(2+) contacts are provided by His-61 and Glu-65. Residues Glu-65, 94-95, 120-122, Ser-125, and Gln-175 contribute to the substrate site; these read ND and STS. 2 residues coordinate Zn(2+): Gln-175 and His-183.

Belongs to the SIS family. GmhA subfamily. Homotetramer. Zn(2+) is required as a cofactor.

It localises to the cytoplasm. The enzyme catalyses 2 D-sedoheptulose 7-phosphate = D-glycero-alpha-D-manno-heptose 7-phosphate + D-glycero-beta-D-manno-heptose 7-phosphate. Its pathway is carbohydrate biosynthesis; D-glycero-D-manno-heptose 7-phosphate biosynthesis; D-glycero-alpha-D-manno-heptose 7-phosphate and D-glycero-beta-D-manno-heptose 7-phosphate from sedoheptulose 7-phosphate: step 1/1. The protein operates within bacterial outer membrane biogenesis; LOS core biosynthesis. Catalyzes the isomerization of sedoheptulose 7-phosphate in D-glycero-D-manno-heptose 7-phosphate. The sequence is that of Phosphoheptose isomerase from Neisseria meningitidis serogroup A / serotype 4A (strain DSM 15465 / Z2491).